Consider the following 383-residue polypeptide: 8-amino-7-oxononanoate synthase (383 aa).

R22 serves as a coordination point for substrate. 109-110 (GF) is a pyridoxal 5'-phosphate binding site. H134 serves as a coordination point for substrate. Pyridoxal 5'-phosphate-binding residues include S178, H206, and T232. N6-(pyridoxal phosphate)lysine is present on K235. T348 provides a ligand contact to substrate.

It belongs to the class-II pyridoxal-phosphate-dependent aminotransferase family. BioF subfamily. In terms of assembly, homodimer. Pyridoxal 5'-phosphate serves as cofactor.

The catalysed reaction is 6-carboxyhexanoyl-[ACP] + L-alanine + H(+) = (8S)-8-amino-7-oxononanoate + holo-[ACP] + CO2. It functions in the pathway cofactor biosynthesis; biotin biosynthesis. In terms of biological role, catalyzes the decarboxylative condensation of pimeloyl-[acyl-carrier protein] and L-alanine to produce 8-amino-7-oxononanoate (AON), [acyl-carrier protein], and carbon dioxide. The chain is 8-amino-7-oxononanoate synthase from Vibrio campbellii (strain ATCC BAA-1116).